The sequence spans 151 residues: FIS1-related protein fis-2 (151 aa).

Residues 126–146 (LIGAAIVGGGALALAGLVAIF) traverse the membrane as a helical segment.

Belongs to the FIS1 family.

The protein resides in the mitochondrion outer membrane. The protein localises to the peroxisome membrane. Its subcellular location is the mitochondrion. Functionally, involved in the fragmentation of the mitochondrial network. Involved in perinuclear clustering of the mitochondrial network. May act, redundantly with fis-1, downstream of mitochondrial fission, before the fission products participate in mitochondrial homeostasis, mitophagy, or apoptosis. Plays a role in apoptosis by promoting mitochondrial elimination and cell-death execution, acting downstream of caspase ced-3, and perhaps independently of dynamin GTPase drp-1, caspase ced-9 and apoptosis-inducing factor AIFM/wah-1. This chain is FIS1-related protein fis-2, found in Caenorhabditis elegans.